The following is a 176-amino-acid chain: Large ribosomal subunit protein eL20A (176 aa).

The protein belongs to the eukaryotic ribosomal protein eL20 family. As to quaternary structure, component of the large ribosomal subunit (LSU). Mature yeast ribosomes consist of a small (40S) and a large (60S) subunit. The 40S small subunit contains 1 molecule of ribosomal RNA (18S rRNA) and at least 33 different proteins. The large 60S subunit contains 3 rRNA molecules (25S, 5.8S and 5S rRNA) and at least 46 different proteins. eL20 forms multiple interactions with RNA and proteins in the central protuberance, connecting components of core functional centers that are located far apart.

The protein localises to the cytoplasm. Functionally, component of the ribosome, a large ribonucleoprotein complex responsible for the synthesis of proteins in the cell. The small ribosomal subunit (SSU) binds messenger RNAs (mRNAs) and translates the encoded message by selecting cognate aminoacyl-transfer RNA (tRNA) molecules. The large subunit (LSU) contains the ribosomal catalytic site termed the peptidyl transferase center (PTC), which catalyzes the formation of peptide bonds, thereby polymerizing the amino acids delivered by tRNAs into a polypeptide chain. The nascent polypeptides leave the ribosome through a tunnel in the LSU and interact with protein factors that function in enzymatic processing, targeting, and the membrane insertion of nascent chains at the exit of the ribosomal tunnel. This chain is Large ribosomal subunit protein eL20A (rpl2001), found in Schizosaccharomyces pombe (strain 972 / ATCC 24843) (Fission yeast).